The chain runs to 193 residues: Ion-translocating oxidoreductase complex subunit A (193 aa).

The next 6 membrane-spanning stretches (helical) occupy residues 5 to 25 (ALLL…FLGL), 39 to 59 (LGMG…SWML), 62 to 82 (WLLA…LVIA), 102 to 122 (SLGI…VALL), 134 to 154 (VLFG…FAGL), and 172 to 192 (AAFI…GLVA).

It belongs to the NqrDE/RnfAE family. In terms of assembly, the complex is composed of six subunits: RnfA, RnfB, RnfC, RnfD, RnfE and RnfG.

The protein localises to the cell inner membrane. Its function is as follows. Part of a membrane-bound complex that couples electron transfer with translocation of ions across the membrane. The chain is Ion-translocating oxidoreductase complex subunit A from Aromatoleum aromaticum (strain DSM 19018 / LMG 30748 / EbN1) (Azoarcus sp. (strain EbN1)).